The following is a 579-amino-acid chain: Peptidyl-prolyl cis-trans isomerase-like 2 (579 aa).

In terms of domain architecture, U-box spans 42–115; it reads RRLPFNFCSL…GEYVDPVTYK (74 aa). A disordered region spans residues 227–261; it reads AERAQRAESGAASKGLTKPGMSATAASQKTVSHQA. The segment covering 250–259 has biased composition (polar residues); it reads TAASQKTVSH. Residues 311–470 form the PPIase cyclophilin-type domain; it reads QKGYARISTT…PDIRIKDVTI (160 aa). The interval 555-579 is disordered; sequence EGPEPEPAKKKFKGGGGFGDFSSWD.

This sequence belongs to the cyclophilin-type PPIase family. PPIL2 subfamily.

Its subcellular location is the nucleus. The catalysed reaction is [protein]-peptidylproline (omega=180) = [protein]-peptidylproline (omega=0). It catalyses the reaction S-ubiquitinyl-[E2 ubiquitin-conjugating enzyme]-L-cysteine + [acceptor protein]-L-lysine = [E2 ubiquitin-conjugating enzyme]-L-cysteine + N(6)-ubiquitinyl-[acceptor protein]-L-lysine.. Its pathway is protein modification; protein ubiquitination. May catalyze the cis-trans isomerization of proline imidic peptide bonds in oligopeptides thereby assisting the folding of proteins. May also function as a chaperone, playing a role in intracellular transport of proteins. May also have a protein ubiquitin ligase activity acting as an E3 ubiquitin protein ligase or as a ubiquitin-ubiquitin ligase promoting elongation of ubiquitin chains on proteins. This Aspergillus fumigatus (strain ATCC MYA-4609 / CBS 101355 / FGSC A1100 / Af293) (Neosartorya fumigata) protein is Peptidyl-prolyl cis-trans isomerase-like 2 (cyp8).